Consider the following 169-residue polypeptide: S-ribosylhomocysteine lyase (169 aa).

Fe cation contacts are provided by His54, His58, and Cys129.

Belongs to the LuxS family. Homodimer. The cofactor is Fe cation.

The enzyme catalyses S-(5-deoxy-D-ribos-5-yl)-L-homocysteine = (S)-4,5-dihydroxypentane-2,3-dione + L-homocysteine. Functionally, involved in the synthesis of autoinducer 2 (AI-2) which is secreted by bacteria and is used to communicate both the cell density and the metabolic potential of the environment. The regulation of gene expression in response to changes in cell density is called quorum sensing. Catalyzes the transformation of S-ribosylhomocysteine (RHC) to homocysteine (HC) and 4,5-dihydroxy-2,3-pentadione (DPD). In Haemophilus ducreyi (strain 35000HP / ATCC 700724), this protein is S-ribosylhomocysteine lyase.